Here is a 75-residue protein sequence, read N- to C-terminus: Small integral membrane protein 7 (75 aa).

A signal peptide spans 1-17 (MIGDILLFGTLLMNAGA). At 18–53 (VLNFKLKKKDTQGFGEESREPSTGDNIREFLLSLRY) the chain is on the extracellular side. Residues 54–74 (FRIFIALWNIFMMFCMIVLFG) form a helical membrane-spanning segment. Residue Ser-75 is a topological domain, cytoplasmic.

The protein belongs to the SMIM7 family.

The protein resides in the membrane. The polypeptide is Small integral membrane protein 7 (SMIM7) (Homo sapiens (Human)).